An 86-amino-acid polypeptide reads, in one-letter code: Small ribosomal subunit protein eS21 (86 aa).

Belongs to the eukaryotic ribosomal protein eS21 family. Component of the 40S small ribosomal subunit.

It localises to the cytoplasm. Its subcellular location is the cytosol. The protein resides in the rough endoplasmic reticulum. This Suberites domuncula (Sponge) protein is Small ribosomal subunit protein eS21 (RPS21).